The chain runs to 214 residues: Osteoclast-stimulating factor 1 (214 aa).

One can recognise an SH3 domain in the interval 12–71; sequence GQVKVYRALFTFDPRTPDELYFEEGDILYISDTSDSNWWKGTCRGRTGLIPSNYVAEQAE. ANK repeat units follow at residues 72 to 101, 105 to 135, and 139 to 168; these read SIDN…GING, AGNT…ELNQ, and LGDT…RTDV.

The protein localises to the cytoplasm. Induces bone resorption, acting probably through a signaling cascade which results in the secretion of factor(s) enhancing osteoclast formation and activity. This chain is Osteoclast-stimulating factor 1 (ostf1), found in Danio rerio (Zebrafish).